The chain runs to 114 residues: NADH-ubiquinone oxidoreductase chain 3 (114 aa).

Transmembrane regions (helical) follow at residues 4–24 (LVYI…SYLL), 55–75 (FYLI…ILPF), and 82–102 (VSLL…IGFI).

This sequence belongs to the complex I subunit 3 family.

The protein resides in the mitochondrion membrane. It catalyses the reaction a ubiquinone + NADH + 5 H(+)(in) = a ubiquinol + NAD(+) + 4 H(+)(out). In terms of biological role, core subunit of the mitochondrial membrane respiratory chain NADH dehydrogenase (Complex I) that is believed to belong to the minimal assembly required for catalysis. Complex I functions in the transfer of electrons from NADH to the respiratory chain. The immediate electron acceptor for the enzyme is believed to be ubiquinone. This chain is NADH-ubiquinone oxidoreductase chain 3 (ND3), found in Allomyces macrogynus.